Here is a 611-residue protein sequence, read N- to C-terminus: CRS2-associated factor 2, chloroplastic (611 aa).

A chloroplast-targeting transit peptide spans 1 to 58; it reads MPPPPPQRPASSHVGRANLFSASPPPLSNRRYPHHRSLPLPPVSPRRRDPKKHSQQPS. The tract at residues 1–72 is disordered; that stretch reads MPPPPPQRPA…TDSGPTRTVT (72 aa). Residues 55-72 are compositionally biased toward polar residues; sequence QQPSQEEPTDSGPTRTVT. 2 consecutive CRM domains span residues 232 to 328 and 350 to 446; these read EPLT…TRPR and DGFT…YSKP. Residues 486-509 are CRS2 binding; the sequence is KMFKLWKSAVDSSLALLLDDAEAN. Residues 554-578 form a disordered region; that stretch reads MNDEPETSVAGNEEGQLEQSPDLRD.

Interacts with CRS2 and RNA. Part of large ribonucleo-protein complexes that include group IIB introns, CRS2 and CAF2.

Its subcellular location is the plastid. It is found in the chloroplast stroma. Functionally, required for the splicing of group IIB introns in chloroplasts. Forms splicing particles with CRS2. Interacts with RNA and confers intron specificity of the splicing particles. In Zea mays (Maize), this protein is CRS2-associated factor 2, chloroplastic (CAF2).